The primary structure comprises 96 residues: Putative defensin-like protein 236 (96 aa).

An N-terminal signal peptide occupies residues 1–23 (MKNATSLIIYCFLMFLLMNNVKG). Disulfide bonds link cysteine 31-cysteine 93, cysteine 41-cysteine 70, cysteine 49-cysteine 83, and cysteine 68-cysteine 85.

It belongs to the DEFL family.

The protein localises to the secreted. The polypeptide is Putative defensin-like protein 236 (SCRL20) (Arabidopsis thaliana (Mouse-ear cress)).